A 1186-amino-acid chain; its full sequence is uncharacterized protein (1186 aa).

This is an uncharacterized protein from Acheta domesticus (House cricket).